The chain runs to 63 residues: Large ribosomal subunit protein bL35 (63 aa).

Composition is skewed to basic residues over residues 1 to 25 (MPKMKSKSSAAKRFKKTANGFKHRQ) and 32 to 47 (LTKKSTKRKRHLRPKK). Residues 1-55 (MPKMKSKSSAAKRFKKTANGFKHRQSFTSHILTKKSTKRKRHLRPKKQVNPSDVP) are disordered.

This sequence belongs to the bacterial ribosomal protein bL35 family.

This chain is Large ribosomal subunit protein bL35, found in Hahella chejuensis (strain KCTC 2396).